The following is a 228-amino-acid chain: Chromatin remodeling protein SHL (228 aa).

Positions 21-137 constitute a BAH domain; sequence KSIQEGDAVL…STTGAFDPDR (117 aa). The PHD-type zinc finger occupies 139–190; that stretch reads TVFCKCEMPYNPDDLMVQCEECSEWFHPSCIGTTIEEAKKPDNFYCEECSPQ. Residues 191–203 are compositionally biased toward polar residues; it reads QQNLHNSNSTSNN. The tract at residues 191–228 is disordered; that stretch reads QQNLHNSNSTSNNRDAKVNGKRSLEVTKSKNKHTKRPG. The segment covering 204 to 218 has biased composition (basic and acidic residues); the sequence is RDAKVNGKRSLEVTK. Residues 210–217 carry the Nuclear localization signal motif; that stretch reads GKRSLEVT. Over residues 219–228 the composition is skewed to basic residues; the sequence is SKNKHTKRPG.

It belongs to the SHL1/EBS protein family. Recognizes di- and trimethylated histone H3 at lysine 4. Interacts with HDA6. Interacts with DEK3. As to expression, expressed ubiquitously. Mostly expressed in roots, stems, leaves and flowers, and, to a lower extent, in siliques.

The protein localises to the nucleus. Chromatin remodeling factor that binds to methylated histone (e.g. H3K4me2/3) to prevent their acetylation (e.g. H3K9K14Ac), likely by recruiting histone deacetylase (HDAC) complexes, and thus regulate the transcription of target genes. Required during development and for fertility, probably by modulating developmental gene expression. Promotes development speed, but at fitness cost. Involved in the chromatin-mediated repression of floral initiation and controls genes regulating flowering. Negatively regulates the expression of the floral integrator SOC1, by preventing high levels of H3 acetylation, thus maintaining an inactive chromatin conformation. In Arabidopsis thaliana (Mouse-ear cress), this protein is Chromatin remodeling protein SHL.